Reading from the N-terminus, the 67-residue chain is UPF0519 protein C (67 aa).

The segment at 18-37 (KSQANLNSNSTNSPNNVQGL) is disordered. A compositionally biased stretch (low complexity) spans 22–33 (NLNSNSTNSPNN).

Belongs to the UPF0519 family.

The protein is UPF0519 protein C of Dictyostelium discoideum (Social amoeba).